We begin with the raw amino-acid sequence, 101 residues long: Small ribosomal subunit protein uS14 (101 aa).

It belongs to the universal ribosomal protein uS14 family. Part of the 30S ribosomal subunit. Contacts proteins S3 and S10.

In terms of biological role, binds 16S rRNA, required for the assembly of 30S particles and may also be responsible for determining the conformation of the 16S rRNA at the A site. This Burkholderia ambifaria (strain MC40-6) protein is Small ribosomal subunit protein uS14.